Here is a 78-residue protein sequence, read N- to C-terminus: Acyl carrier protein (78 aa).

The Carrier domain occupies 2–77; it reads STIEERVKKI…AAIDFIQANQ (76 aa). S37 carries the O-(pantetheine 4'-phosphoryl)serine modification.

It belongs to the acyl carrier protein (ACP) family. In terms of processing, 4'-phosphopantetheine is transferred from CoA to a specific serine of apo-ACP by AcpS. This modification is essential for activity because fatty acids are bound in thioester linkage to the sulfhydryl of the prosthetic group.

It localises to the cytoplasm. It functions in the pathway lipid metabolism; fatty acid biosynthesis. Functionally, carrier of the growing fatty acid chain in fatty acid biosynthesis. In Pectobacterium atrosepticum (strain SCRI 1043 / ATCC BAA-672) (Erwinia carotovora subsp. atroseptica), this protein is Acyl carrier protein.